A 358-amino-acid chain; its full sequence is Photosystem II protein D1 2 (358 aa).

The next 3 helical transmembrane spans lie at 28–45 (YVGW…AATI), 117–132 (HFLI…QWEL), and 141–155 (WICV…AAMA). His117 contacts chlorophyll a. Residue Tyr125 coordinates pheophytin a. Asp169 and Glu188 together coordinate [CaMn4O5] cluster. The helical transmembrane segment at 196–217 (FHMLGVAGVFGGSLFSAMHGSL) threads the bilayer. His197 provides a ligand contact to chlorophyll a. Residues His214 and 263 to 264 (SF) each bind a quinone. His214 contributes to the Fe cation binding site. His271 lines the Fe cation pocket. Residues 273–287 (FLGAWPVVGIWFTSM) form a helical membrane-spanning segment. [CaMn4O5] cluster contacts are provided by His331, Glu332, Asp341, and Ala343. Positions 344–358 (TVESTPVALQAPAIG) are excised as a propeptide.

The protein belongs to the reaction center PufL/M/PsbA/D family. In terms of assembly, PSII is composed of 1 copy each of membrane proteins PsbA, PsbB, PsbC, PsbD, PsbE, PsbF, PsbH, PsbI, PsbJ, PsbK, PsbL, PsbM, PsbT, PsbX, PsbY, PsbZ, Psb30/Ycf12, peripheral proteins PsbO, CyanoQ (PsbQ), PsbU, PsbV and a large number of cofactors. It forms dimeric complexes. The cofactor is The D1/D2 heterodimer binds P680, chlorophylls that are the primary electron donor of PSII, and subsequent electron acceptors. It shares a non-heme iron and each subunit binds pheophytin, quinone, additional chlorophylls, carotenoids and lipids. D1 provides most of the ligands for the Mn4-Ca-O5 cluster of the oxygen-evolving complex (OEC). There is also a Cl(-1) ion associated with D1 and D2, which is required for oxygen evolution. The PSII complex binds additional chlorophylls, carotenoids and specific lipids.. Tyr-160 forms a radical intermediate that is referred to as redox-active TyrZ, YZ or Y-Z. In terms of processing, C-terminally processed by CtpA; processing is essential to allow assembly of the oxygen-evolving complex and thus photosynthetic growth.

It is found in the cellular thylakoid membrane. It carries out the reaction 2 a plastoquinone + 4 hnu + 2 H2O = 2 a plastoquinol + O2. Its function is as follows. Photosystem II (PSII) is a light-driven water:plastoquinone oxidoreductase that uses light energy to abstract electrons from H(2)O, generating O(2) and a proton gradient subsequently used for ATP formation. It consists of a core antenna complex that captures photons, and an electron transfer chain that converts photonic excitation into a charge separation. The D1/D2 (PsbA/PsbD) reaction center heterodimer binds P680, the primary electron donor of PSII as well as several subsequent electron acceptors. This is Photosystem II protein D1 2 from Parasynechococcus marenigrum (strain WH8102).